A 427-amino-acid chain; its full sequence is Peptidase B (427 aa).

Residues Lys-195 and Asp-200 each contribute to the Mn(2+) site. Residue Lys-207 is part of the active site. Positions 218, 277, and 279 each coordinate Mn(2+). Arg-281 is a catalytic residue.

It belongs to the peptidase M17 family. Homohexamer. The cofactor is Mn(2+).

The protein localises to the cytoplasm. It carries out the reaction Release of an N-terminal amino acid, Xaa, from a peptide or arylamide. Xaa is preferably Glu or Asp but may be other amino acids, including Leu, Met, His, Cys and Gln.. Probably plays an important role in intracellular peptide degradation. The protein is Peptidase B of Salmonella typhi.